Consider the following 101-residue polypeptide: Small ribosomal subunit protein bS6 (101 aa).

This sequence belongs to the bacterial ribosomal protein bS6 family.

Functionally, binds together with bS18 to 16S ribosomal RNA. This is Small ribosomal subunit protein bS6 from Oleidesulfovibrio alaskensis (strain ATCC BAA-1058 / DSM 17464 / G20) (Desulfovibrio alaskensis).